The chain runs to 66 residues: Large ribosomal subunit protein bL31 (66 aa).

Zn(2+)-binding residues include cysteine 16, cysteine 18, cysteine 36, and cysteine 39.

This sequence belongs to the bacterial ribosomal protein bL31 family. Type A subfamily. Part of the 50S ribosomal subunit. Zn(2+) is required as a cofactor.

In terms of biological role, binds the 23S rRNA. The polypeptide is Large ribosomal subunit protein bL31 (Geobacillus kaustophilus (strain HTA426)).